The primary structure comprises 534 residues: CTP synthase (534 aa).

Positions 1 to 266 (MKQKFIFVTG…DELIVARLGL (266 aa)) are amidoligase domain. Ser-14 serves as a coordination point for CTP. Residue Ser-14 coordinates UTP. ATP contacts are provided by residues 15–20 (SIGKGL) and Asp-72. The Mg(2+) site is built by Asp-72 and Glu-140. Residues 147-149 (DIE), 187-192 (KSKPTQ), and Lys-223 contribute to the CTP site. Residues 187–192 (KSKPTQ) and Lys-223 contribute to the UTP site. The Glutamine amidotransferase type-1 domain occupies 291-534 (KIGVVGKYVD…HFVKASLKKK (244 aa)). L-glutamine is bound at residue Gly-353. Cys-380 (nucleophile; for glutamine hydrolysis) is an active-site residue. L-glutamine is bound by residues 381–384 (FGMQ), Glu-404, and Arg-464. Active-site residues include His-509 and Glu-511.

This sequence belongs to the CTP synthase family. In terms of assembly, homotetramer.

The catalysed reaction is UTP + L-glutamine + ATP + H2O = CTP + L-glutamate + ADP + phosphate + 2 H(+). It catalyses the reaction L-glutamine + H2O = L-glutamate + NH4(+). It carries out the reaction UTP + NH4(+) + ATP = CTP + ADP + phosphate + 2 H(+). It participates in pyrimidine metabolism; CTP biosynthesis via de novo pathway; CTP from UDP: step 2/2. Allosterically activated by GTP, when glutamine is the substrate; GTP has no effect on the reaction when ammonia is the substrate. The allosteric effector GTP functions by stabilizing the protein conformation that binds the tetrahedral intermediate(s) formed during glutamine hydrolysis. Inhibited by the product CTP, via allosteric rather than competitive inhibition. In terms of biological role, catalyzes the ATP-dependent amination of UTP to CTP with either L-glutamine or ammonia as the source of nitrogen. Regulates intracellular CTP levels through interactions with the four ribonucleotide triphosphates. The polypeptide is CTP synthase (Bdellovibrio bacteriovorus (strain ATCC 15356 / DSM 50701 / NCIMB 9529 / HD100)).